Reading from the N-terminus, the 200-residue chain is Coiled-coil domain-containing protein 28B (200 aa).

Met-1 carries the post-translational modification N-acetylmethionine. Positions 1–10 (MEDKKKKRSP) are enriched in basic residues. The tract at residues 1-49 (MEDKKKKRSPKPCLTQPAQAPGTLRRVPVPTSHSGSLALGLPHLPSPKQ) is disordered. Phosphoserine is present on residues Ser-46 and Ser-115. Residues 140–152 (GEEEDEEEEEDGV) are compositionally biased toward acidic residues. Positions 140-165 (GEEEDEEEEEDGVTEGLPEEQKKTMA) are disordered. Residues 158 to 189 (EEQKKTMADRNLDQLLSNLEDLSNSIQKLHLA) adopt a coiled-coil conformation.

In terms of assembly, interacts with BBS1, BBS2, BBS4, BBS5, BBS6, BBS7 and TTC8/BBS8. Interacts with MAPKAP1/SIN1 isoform 1 and RICTOR. In terms of tissue distribution, expressed in the retina, pericardium and limb epithelium.

It localises to the cytoplasm. It is found in the cytoskeleton. The protein resides in the microtubule organizing center. Its subcellular location is the centrosome. Involved in ciliogenesis. Regulates cilia length through its interaction with MAPKAP1/SIN1 but independently of mTORC2 complex. Modulates mTORC2 complex assembly and function, possibly enhances AKT1 phosphorylation. Does not seem to modulate assembly and function of mTORC1 complex. The protein is Coiled-coil domain-containing protein 28B (Ccdc28b) of Mus musculus (Mouse).